The sequence spans 703 residues: Protein STRUBBELIG-RECEPTOR FAMILY 8 (703 aa).

A signal peptide spans 1 to 27 (MAIGDRAMFTVLLLFIASISGFSVVRC). Residues 28–291 (VTDPSDVQAL…GKGLSGGVVT (264 aa)) lie on the Extracellular side of the membrane. LRR repeat units lie at residues 96 to 120 (LKSLRKLDVSGNSIHDTLPYQLPPN), 122 to 142 (TSLNLARNNLSGNLPYSISAM), 143 to 165 (GSLSYMNVSGNSLTMSIGDIFAD), 166 to 190 (HKSLATLDLSHNNFSGDLPSSLSTV), 192 to 212 (TLSVLYVQNNQLTGSIDVLSG), 213 to 233 (LPLKTLNVANNHFNGSIPKEL), and 234 to 256 (SSIQTLIYDGNSFDNVPASPQPE). N120, N130, N149, and N178 each carry an N-linked (GlcNAc...) asparagine glycan. An N-linked (GlcNAc...) asparagine glycan is attached at N226. The disordered stretch occupies residues 247-284 (DNVPASPQPERPGKKETPSGSKKPKIGSEEKSSDSGKG). Residues 292–312 (GIVFGSLFVAGIIALVLYLCL) form a helical membrane-spanning segment. The Cytoplasmic portion of the chain corresponds to 313–703 (HKKKRKVRGS…PEHEHVDISF (391 aa)). Residues 395-672 (FSQENIIGEG…SEVVQQLVRL (278 aa)) form the Protein kinase domain. ATP is bound by residues 401 to 409 (IGEGSLGRV) and K423.

This sequence belongs to the protein kinase superfamily. Ser/Thr protein kinase family. In terms of tissue distribution, expressed in seedlings, roots, stems, leaves, flowers and siliques.

The protein localises to the membrane. In Arabidopsis thaliana (Mouse-ear cress), this protein is Protein STRUBBELIG-RECEPTOR FAMILY 8 (SRF8).